The primary structure comprises 103 residues: Co-chaperonin GroES (103 aa).

It belongs to the GroES chaperonin family. As to quaternary structure, heptamer of 7 subunits arranged in a ring. Interacts with the chaperonin GroEL.

Its subcellular location is the cytoplasm. Together with the chaperonin GroEL, plays an essential role in assisting protein folding. The GroEL-GroES system forms a nano-cage that allows encapsulation of the non-native substrate proteins and provides a physical environment optimized to promote and accelerate protein folding. GroES binds to the apical surface of the GroEL ring, thereby capping the opening of the GroEL channel. This is Co-chaperonin GroES from Prochlorococcus marinus subsp. pastoris (strain CCMP1986 / NIES-2087 / MED4).